A 465-amino-acid polypeptide reads, in one-letter code: Sodium-dependent phosphate transport protein 1 (465 aa).

Asn39, Asn47, and Asn56 each carry an N-linked (GlcNAc...) asparagine glycan. 10 helical membrane-spanning segments follow: residues 79–99 (GLVL…VGYL), 117–137 (SVLS…VIVC), 176–196 (FVMG…LLGW), 199–219 (VFYI…ILLF), 260–280 (LPLW…NLLV), 299–319 (GLLS…AGQM), 337–357 (LFTT…LYLS), 363–383 (TVIF…GQLI), 399–419 (VTAL…GLIL), and 431–451 (FFLM…FAKG).

Belongs to the major facilitator superfamily. Sodium/anion cotransporter family. Interacts with PDZK1.

Its subcellular location is the apical cell membrane. The enzyme catalyses 3 Na(+)(out) + phosphate(out) = 3 Na(+)(in) + phosphate(in). It carries out the reaction urate(out) = urate(in). Its function is as follows. Important for the resorption of phosphate by the kidney. May be involved in actively transporting phosphate into cells via Na(+) cotransport in the renal brush border membrane. Plays a role in urate transport in the kidney. The sequence is that of Sodium-dependent phosphate transport protein 1 (Slc17a1) from Rattus norvegicus (Rat).